The sequence spans 247 residues: 3-deoxy-manno-octulosonate cytidylyltransferase (247 aa).

This sequence belongs to the KdsB family.

Its subcellular location is the cytoplasm. It catalyses the reaction 3-deoxy-alpha-D-manno-oct-2-ulosonate + CTP = CMP-3-deoxy-beta-D-manno-octulosonate + diphosphate. Its pathway is nucleotide-sugar biosynthesis; CMP-3-deoxy-D-manno-octulosonate biosynthesis; CMP-3-deoxy-D-manno-octulosonate from 3-deoxy-D-manno-octulosonate and CTP: step 1/1. It participates in bacterial outer membrane biogenesis; lipopolysaccharide biosynthesis. Activates KDO (a required 8-carbon sugar) for incorporation into bacterial lipopolysaccharide in Gram-negative bacteria. This is 3-deoxy-manno-octulosonate cytidylyltransferase from Methylorubrum extorquens (strain CM4 / NCIMB 13688) (Methylobacterium extorquens).